A 292-amino-acid chain; its full sequence is NAD kinase (292 aa).

Residue Asp-73 is the Proton acceptor of the active site. NAD(+) is bound by residues 73–74, 147–148, His-158, Arg-175, Asp-177, 188–193, and Gln-247; these read DG, NE, and TAYSLS.

Belongs to the NAD kinase family. A divalent metal cation serves as cofactor.

The protein localises to the cytoplasm. It catalyses the reaction NAD(+) + ATP = ADP + NADP(+) + H(+). Involved in the regulation of the intracellular balance of NAD and NADP, and is a key enzyme in the biosynthesis of NADP. Catalyzes specifically the phosphorylation on 2'-hydroxyl of the adenosine moiety of NAD to yield NADP. The sequence is that of NAD kinase from Enterobacter sp. (strain 638).